A 431-amino-acid polypeptide reads, in one-letter code: MAKIINVIGREIMDSRGNPTVEAEVHLDGGFVGMAAAPSGASTGSREALELRDGDKSRYMGKGVLTAVANINGQIRDALMGKDATAQAELDQIMIDLDGTENKDKLGANAILAVSLAAAKAAAAFKGMPLYAHIAELNGTPGQYSMPVPMMNILNGGEHADNNVDIQEFMVQPVGAKSFREALRMGAEIFHNLKKVLQEKGLNTAVGDEGGFAPNLASNADALAVIKVAVEKAGYKLGEDVTLALDCAASEFYKDGQYDLSGEGKVFDSNGFSDFLKSLTEEYPIVSIEDGLDESDWDGWAYQTQILGDKIQLVGDDLFVTNTKILSRGIENKIANSILIKFNQIGSLTETLAAIRMAKDAGYTVVISHRSGETEDATIADLAVATAAGQIKTGSLCRSDRVAKYNQLLRIEEQLGEKAPYKGRSEIKGQA.

Gln-167 contacts (2R)-2-phosphoglycerate. The Proton donor role is filled by Glu-209. Mg(2+) contacts are provided by Asp-246, Glu-289, and Asp-316. (2R)-2-phosphoglycerate contacts are provided by Lys-341, Arg-370, Ser-371, and Lys-392. Residue Lys-341 is the Proton acceptor of the active site.

Belongs to the enolase family. Component of the RNA degradosome, a multiprotein complex involved in RNA processing and mRNA degradation. Mg(2+) serves as cofactor.

Its subcellular location is the cytoplasm. The protein localises to the secreted. The protein resides in the cell surface. The catalysed reaction is (2R)-2-phosphoglycerate = phosphoenolpyruvate + H2O. It functions in the pathway carbohydrate degradation; glycolysis; pyruvate from D-glyceraldehyde 3-phosphate: step 4/5. Catalyzes the reversible conversion of 2-phosphoglycerate (2-PG) into phosphoenolpyruvate (PEP). It is essential for the degradation of carbohydrates via glycolysis. The sequence is that of Enolase from Shewanella loihica (strain ATCC BAA-1088 / PV-4).